The following is a 389-amino-acid chain: Basigin (389 aa).

An N-terminal signal peptide occupies residues 1-21 (MAAALLLALAFTLLSGQGACA). Residues 22-325 (AAGFLKAPLS…ETISLRVRSR (304 aa)) lie on the Extracellular side of the membrane. The Ig-like domain maps to 37-120 (GGSVVLHCEA…SSDPDRNHLT (84 aa)). Cystine bridges form between Cys-44–Cys-108, Cys-157–Cys-203, and Cys-242–Cys-305. Residues 138 to 219 (EPGTIQTSVQ…VGRSEINVEG (82 aa)) enclose the Ig-like C2-type domain. 3 N-linked (GlcNAc...) asparagine glycosylation sites follow: Asn-160, Asn-270, and Asn-306. An Ig-like V-type domain is found at 221–319 (PRIKVGKKSE…AQGTTRETIS (99 aa)). Residues 326–349 (MAALWPFLGIVAEVLVLVTIIFIY) traverse the membrane as a helical segment. The Cytoplasmic segment spans residues 350–389 (EKRRKPDQTLDEDDPGAAPLKGSGTHMNDKDKNVRQRNAT). Positions 356-389 (DQTLDEDDPGAAPLKGSGTHMNDKDKNVRQRNAT) are disordered. Residue Thr-358 is modified to Phosphothreonine. Ser-372 carries the phosphoserine modification.

Interacts with NXNL1. Interacts with SLC2A1 and SLC16A1/GLUT1. Interacts with XKR8; promoting its localization at the cell membrane. In terms of assembly, interacts with ATP1B2, MAG and L1CAM. Interacts with SLC16A7. Interacts with VEGFA, KDR/VEGFR2, PPIA/CYPA, SLC1A3, SLC16A11 and SLC16A12. Interacts with PPIL2; regulates BSG transport to the cell membrane. Interacts with SLC16A1; interaction mediates SLC16A1 targeting to the plasma membrane. Interacts with SLC16A3; interaction mediates SLC16A3 targeting to the plasma membrane. As to quaternary structure, interacts with SLC16A6; this interaction mediates targeting to the plasma membrane. N-glycosylated. Post-translationally, N-glycosylated. During spermatogenesis, probably deglycosylated during epididymal transit. In terms of tissue distribution, retina-specific. Expressed in both rods and cones (at protein level). As to expression, testis and caput, corpus and cauda epididymides (at protein level). Expressed in the brain, lung, liver, kidney, heart, spleen, uterus, retina and skeletal muscle.

It localises to the cell membrane. The protein resides in the photoreceptor inner segment. Its subcellular location is the cell projection. It is found in the cilium. The protein localises to the photoreceptor outer segment. It localises to the endoplasmic reticulum membrane. The protein resides in the basolateral cell membrane. Essential for normal retinal maturation and development. Acts as a retinal cell surface receptor for NXNL1 and plays an important role in NXNL1-mediated survival of retinal cone photoreceptors. In association with glucose transporter SLC16A1/GLUT1 and NXNL1, promotes retinal cone survival by enhancing aerobic glycolysis and accelerating the entry of glucose into photoreceptors. Functionally, signaling receptor for cyclophilins, essential for PPIA/CYPA and PPIB/CYPB-dependent signaling related to chemotaxis and adhesion of immune cells. Plays an important role in targeting the monocarboxylate transporters SLC16A1, SLC16A3 and SLC16A8 to the plasma membrane. Acts as a coreceptor for vascular endothelial growth factor receptor 2 (KDR/VEGFR2) in endothelial cells enhancing its VEGFA-mediated activation and downstream signaling. Promotes angiogenesis through EPAS1/HIF2A-mediated up-regulation of VEGFA and KDR/VEGFR2 in endothelial cells. Plays an important role in spermatogenesis; mediates interactions between germ cells and Sertoli cell and is essential for the development/differentiation of germ cells to round spermatids. The chain is Basigin (Bsg) from Mus musculus (Mouse).